Reading from the N-terminus, the 513-residue chain is Glycerol-3-phosphate dehydrogenase (513 aa).

Aspartate 16–glutamate 44 contributes to the FAD binding site.

The protein belongs to the FAD-dependent glycerol-3-phosphate dehydrogenase family. FAD serves as cofactor.

The protein localises to the cytoplasm. It carries out the reaction a quinone + sn-glycerol 3-phosphate = dihydroxyacetone phosphate + a quinol. This Pseudomonas tolaasii protein is Glycerol-3-phosphate dehydrogenase (glpD).